The primary structure comprises 201 residues: Peptidyl-prolyl cis-trans isomerase FKBP11 (201 aa).

The signal sequence occupies residues 1-27; that stretch reads MTLRPSLLPLHLLLLLLLSAAVCRAEA. Positions 57–144 constitute a PPIase FKBP-type domain; that stretch reads GDTLHIHYTG…QYDVELIALI (88 aa). The helical transmembrane segment at 156 to 176 threads the bilayer; it reads ILPLVGMAMVPALLGLIGYHL.

The protein belongs to the FKBP-type PPIase family. In terms of assembly, interacts with IFITM5.

It localises to the membrane. It carries out the reaction [protein]-peptidylproline (omega=180) = [protein]-peptidylproline (omega=0). Functionally, PPIases accelerate the folding of proteins during protein synthesis. In Homo sapiens (Human), this protein is Peptidyl-prolyl cis-trans isomerase FKBP11 (FKBP11).